The chain runs to 103 residues: Small ribosomal subunit protein uS10 (103 aa).

This sequence belongs to the universal ribosomal protein uS10 family. As to quaternary structure, part of the 30S ribosomal subunit.

Involved in the binding of tRNA to the ribosomes. The sequence is that of Small ribosomal subunit protein uS10 from Ralstonia pickettii (strain 12J).